A 247-amino-acid chain; its full sequence is MFAKSFPLNPFLESVADRIRERVKGLTGVESLELAPDLKNIYGKTDGEDFFIFNELHQSRGFRKLHIETAVFEPSLEILHVVFFPDPAFDLPIFGVDLIAVPQGISAAIVDLSPVRDKLPRTIENQLAQIEIPSFEKVRKLPDWGDIFSSHVQFITPIGAEENGFFLDLVDKFLTILIDYSESIEPDLDDSPFTIERIEGQMYYCLQQKQNDKTRNVLAKAFSPNWANQYIEMVLFDMPVHTKNLDN.

This sequence belongs to the HY2 family.

The catalysed reaction is (2R,3Z)-phycocyanobilin + 4 oxidized [2Fe-2S]-[ferredoxin] = biliverdin IXalpha + 4 reduced [2Fe-2S]-[ferredoxin] + 4 H(+). In terms of biological role, catalyzes the four-electron reduction of biliverdin IX-alpha (2-electron reduction at both the A and D rings); the reaction proceeds via an isolatable 2-electron intermediate, 181,182-dihydrobiliverdin. The polypeptide is Phycocyanobilin:ferredoxin oxidoreductase (pcyA) (Prochlorococcus marinus (strain SARG / CCMP1375 / SS120)).